The following is a 754-amino-acid chain: Phosphatase and actin regulator 4B (754 aa).

A compositionally biased stretch (basic and acidic residues) spans 1–12; that stretch reads MENRDDEVEHQH. 4 disordered regions span residues 1–38, 83–105, 120–625, and 637–666; these read MENRDDEVEHQHSTMGSEGGTAGDGTPPPKRKGKFSTL, KELPDNESGEAHGHKAPYVKNGH, VHSP…SKEQ, and LTRRLSQRPTAEELEQRNILQPKNEADRQA. One copy of the RPEL 1 repeat lies at 61-86; the sequence is EVLERKMSMRRPRQELIEQGVLKELP. 3 stretches are compositionally biased toward basic and acidic residues: residues 138 to 153, 184 to 221, and 229 to 241; these read PEDRRARAPSDGDHRG, HGEDIRRGGRAHAEMDKRPGLMKAPSEDGRRTRPEPDW, and SSVEEGRGRRESD. 2 stretches are compositionally biased toward low complexity: residues 296–307 and 316–333; these read SFCSSNSSSSSS and SSAGANTAPPGGAPLTTS. Pro residues-rich tracts occupy residues 348-357, 381-390, 427-445, and 460-478; these read KQPPMPPPKP, KPSPPMPPKR, LPPPPPSPPLPTHIPPSPP, and YPLPQPLPVHFDPPSPPED. Composition is skewed to acidic residues over residues 483-503, 541-557, and 566-576; these read DEDDYSDEEEEEEDDEDDEEP, SEEEEDEEDQHPEESDS, and DESDEDEEDDS. Basic and acidic residues predominate over residues 605 to 615; it reads QAPERQAKSEH. RPEL repeat units lie at residues 635–660 and 673–698; these read TALTRRLSQRPTAEELEQRNILQPKN and RRLTRKLSQRPTVAELQARKILRFHE. A Phosphoserine modification is found at S642.

This sequence belongs to the phosphatase and actin regulator family. In terms of assembly, binds ppp1ca and actin.

It is found in the cytoplasm. The protein resides in the cell projection. Its subcellular location is the lamellipodium. Functionally, regulator of protein phosphatase 1 (PP1) required for neural tube and optic fissure closure, and enteric neural crest cell (ENCCs) migration during development. Acts as an activator of PP1. During neural tube closure, localizes to the ventral neural tube and activates PP1, leading to down-regulate cell proliferation within cranial neural tissue and the neural retina. Also acts as a regulator of migration of enteric neural crest cells (ENCCs) by activating PP1, leading to repression of the integrin signaling through the rho/rock pathway. The polypeptide is Phosphatase and actin regulator 4B (phactr4b) (Danio rerio (Zebrafish)).